Reading from the N-terminus, the 653-residue chain is Sodium-dependent phosphate transporter 2 (653 aa).

At 1–5 (MVLDE) the chain is on the extracellular side. Residues 6–26 (YMWMVIVGFIIAFVLAFSVGA) traverse the membrane as a helical segment. Over 27–46 (NDVANSFGTAVGSGVVTLRQ) the chain is Cytoplasmic. A helical transmembrane segment spans residues 47 to 67 (ACILASIFETIGSVLLGAKVG). The Extracellular segment spans residues 68–86 (ETIRKGIIDVNLYNNTVDL). N-linked (GlcNAc...) asparagine glycosylation is present at N81. A helical membrane pass occupies residues 87–107 (LMAGEVSAMVGSAVWQLIASF). Topologically, residues 108–109 (LK) are cytoplasmic. The helical transmembrane segment at 110–130 (LPVSGTHCIVGATIGFSLVAV) threads the bilayer. At 131–142 (GAHSVQWMQLVK) the chain is on the extracellular side. A helical membrane pass occupies residues 143 to 163 (IVASWFISPLLSGLMSGALFL). Over 164-187 (MIKFFILNKEDPVPNGLKALPVFY) the chain is Cytoplasmic. The helical transmembrane segment at 188-208 (AATIGINVFSILFTGAPLLGL) threads the bilayer. The Extracellular segment spans residues 209-217 (QTFPVWATA). The helical transmembrane segment at 218-238 (LLSVGIAIVFALVVWFFVCPW) threads the bilayer. Over 239 to 483 (MKKKIASRLK…EDKEEKDKSQ (245 aa)) the chain is Cytoplasmic. Residues 275–310 (LPGAKGNDESVLPLTSSSPDAAVSSESVSNGNTRVP) form a disordered region. Positions 290–303 (SSSPDAAVSSESVS) are enriched in low complexity. The helical transmembrane segment at 484 to 504 (VHLLFHFLQILTACFGSFAHG) threads the bilayer. The Extracellular portion of the chain corresponds to 505–532 (GNDVSNAIGPLVALWLIYQQGGVMQEAS). Residues 533–553 (TPVWLLLYGGVGICAGLWVWG) form a helical membrane-spanning segment. Over 554–572 (RRVIQTMGKDLTPITPSSG) the chain is Cytoplasmic. The chain crosses the membrane as a helical span at residues 573–587 (FTIELASAFTVVVAS). Residues 588 to 594 (NIGLPIS) are Extracellular-facing. A helical transmembrane segment spans residues 595–610 (TTHCKVGSVVAVGWIR). The Cytoplasmic portion of the chain corresponds to 611–622 (SRKAVDWRLFRN). Residues 623–643 (IFLAWFVTVPVAGLFSAGVMA) form a helical membrane-spanning segment. At 644–653 (ILQYGILPYV) the chain is on the extracellular side.

It belongs to the inorganic phosphate transporter (PiT) (TC 2.A.20) family. Homodimer.

It is found in the cell membrane. It localises to the apical cell membrane. The catalysed reaction is 2 Na(+)(out) + phosphate(out) = 2 Na(+)(in) + phosphate(in). Its function is as follows. Sodium-phosphate symporter which preferentially transports the monovalent form of phosphate with a stoichiometry of two sodium ions per phosphate ion. The polypeptide is Sodium-dependent phosphate transporter 2 (slc20a2) (Xenopus laevis (African clawed frog)).